Consider the following 82-residue polypeptide: ATP synthase subunit c, chloroplastic (82 aa).

Transmembrane regions (helical) follow at residues 4-24 (IISAASVIAAGLAIGLAAIGP) and 57-77 (LAFMEALTIYGLVVALALLFA).

This sequence belongs to the ATPase C chain family. In terms of assembly, F-type ATPases have 2 components, F(1) - the catalytic core - and F(0) - the membrane proton channel. F(1) has five subunits: alpha(3), beta(3), gamma(1), delta(1), epsilon(1). F(0) has four main subunits: a(1), b(1), b'(1) and c(10-14). The alpha and beta chains form an alternating ring which encloses part of the gamma chain. F(1) is attached to F(0) by a central stalk formed by the gamma and epsilon chains, while a peripheral stalk is formed by the delta, b and b' chains.

It is found in the plastid. It localises to the chloroplast thylakoid membrane. F(1)F(0) ATP synthase produces ATP from ADP in the presence of a proton or sodium gradient. F-type ATPases consist of two structural domains, F(1) containing the extramembraneous catalytic core and F(0) containing the membrane proton channel, linked together by a central stalk and a peripheral stalk. During catalysis, ATP synthesis in the catalytic domain of F(1) is coupled via a rotary mechanism of the central stalk subunits to proton translocation. Functionally, key component of the F(0) channel; it plays a direct role in translocation across the membrane. A homomeric c-ring of between 10-14 subunits forms the central stalk rotor element with the F(1) delta and epsilon subunits. The sequence is that of ATP synthase subunit c, chloroplastic from Trieres chinensis (Marine centric diatom).